The following is a 214-amino-acid chain: Probable septum site-determining protein MinC (214 aa).

This sequence belongs to the MinC family. In terms of assembly, interacts with MinD and FtsZ.

Functionally, cell division inhibitor that blocks the formation of polar Z ring septums. Rapidly oscillates between the poles of the cell to destabilize FtsZ filaments that have formed before they mature into polar Z rings. Prevents FtsZ polymerization. The protein is Probable septum site-determining protein MinC of Thermoanaerobacter pseudethanolicus (strain ATCC 33223 / 39E) (Clostridium thermohydrosulfuricum).